A 156-amino-acid polypeptide reads, in one-letter code: Ribosomal RNA large subunit methyltransferase H (156 aa).

S-adenosyl-L-methionine contacts are provided by residues Leu-72, Gly-104, and 123-128; that span reads LGPMTF.

It belongs to the RNA methyltransferase RlmH family. In terms of assembly, homodimer.

The protein resides in the cytoplasm. It catalyses the reaction pseudouridine(1915) in 23S rRNA + S-adenosyl-L-methionine = N(3)-methylpseudouridine(1915) in 23S rRNA + S-adenosyl-L-homocysteine + H(+). Functionally, specifically methylates the pseudouridine at position 1915 (m3Psi1915) in 23S rRNA. The polypeptide is Ribosomal RNA large subunit methyltransferase H (Nitratidesulfovibrio vulgaris (strain ATCC 29579 / DSM 644 / CCUG 34227 / NCIMB 8303 / VKM B-1760 / Hildenborough) (Desulfovibrio vulgaris)).